The sequence spans 179 residues: Large ribosomal subunit protein uL5 (179 aa).

The protein belongs to the universal ribosomal protein uL5 family. In terms of assembly, part of the 50S ribosomal subunit; part of the 5S rRNA/L5/L18/L25 subcomplex. Contacts the 5S rRNA and the P site tRNA. Forms a bridge to the 30S subunit in the 70S ribosome.

In terms of biological role, this is one of the proteins that bind and probably mediate the attachment of the 5S RNA into the large ribosomal subunit, where it forms part of the central protuberance. In the 70S ribosome it contacts protein S13 of the 30S subunit (bridge B1b), connecting the 2 subunits; this bridge is implicated in subunit movement. Contacts the P site tRNA; the 5S rRNA and some of its associated proteins might help stabilize positioning of ribosome-bound tRNAs. In Buchnera aphidicola subsp. Cinara cedri (strain Cc), this protein is Large ribosomal subunit protein uL5.